A 669-amino-acid chain; its full sequence is MIAKPNQATTEPPLSLRPGTVPTVPATTPARPATITIQRRHPAPKADSTPHTLPPFSPSPSPASSPSPAPAQTPGAQKTQSQAAITHPAAVASPSAPVAAAAPKTPKTPEPRSTHTHTHTHSQHFSPPPRESEMDGERSPSHSGHEMTLSMDGIDSSLVFGSARVPVNSSTPYSDATRTKKHSPGHIKRPMNAFMVWSQMERRKICERTPDLHNAEISKELGRRWQLLSKDDKQPYIIEAEKLRKLHMIEYPNYKYRPQKKQTRSPGSLKPNQDADGCEARNDTTNNNNSLTTLAINGTTTAGRKSKRSTSTCQSGSASKRLRNDSGDTSSKPKYEVKMESAEQLNSADIILPSADNLISYQSSEYLPLSTLSNADCDEKLHSELSSGPLESRENLSEVVNRFLPLFLGGNEDSQLGVSSLTQSQHNQSDPTAGLMDNISDISPINDREELTEEVMRYLPYLEVNPSSDGLTLKVESSSLLGKPLNEPVFDSEDNIVNDANLHSASHQIPPYVPDSHDCFAEDCGGDSSSHQVEFEVVRPQTVTMTMTCTLPYGGPDAGHTTFQADDFNAIPSAAEDSECSILTTSNSPQIGFNGSSFVEADAIGSTCTYAQQDYTGSVIETHNDLNYAAHDNNGALLAYTFEDLPPQPTGSHLEFNTNKYEFASYYKM.

Positions 1-12 (MIAKPNQATTEP) are enriched in polar residues. 3 disordered regions span residues 1–149 (MIAK…EMTL), 254–336 (YKYR…PKYE), and 419–439 (SSLT…MDNI). A compositionally biased stretch (low complexity) spans 17–37 (RPGTVPTVPATTPARPATITI). Residues 52–71 (TLPPFSPSPSPASSPSPAPA) are compositionally biased toward pro residues. Residues 75 to 84 (GAQKTQSQAA) show a composition bias toward polar residues. Residues 88–105 (PAAVASPSAPVAAAAPKT) are compositionally biased toward low complexity. Residues 130 to 145 (RESEMDGERSPSHSGH) are compositionally biased toward basic and acidic residues. The segment at residues 187–255 (IKRPMNAFMV…LHMIEYPNYK (69 aa)) is a DNA-binding region (HMG box). The segment covering 284-294 (TTNNNNSLTTL) has biased composition (low complexity). The span at 295–318 (AINGTTTAGRKSKRSTSTCQSGSA) shows a compositional bias: polar residues. Residues 322–336 (LRNDSGDTSSKPKYE) are compositionally biased toward basic and acidic residues. Residues 419–431 (SSLTQSQHNQSDP) are compositionally biased toward polar residues.

It is found in the nucleus. The polypeptide is Putative transcription factor SOX-14 (Sox14) (Drosophila melanogaster (Fruit fly)).